Here is a 612-residue protein sequence, read N- to C-terminus: Dihydroxy-acid dehydratase (612 aa).

Mg(2+) is bound at residue Asp81. Residue Cys122 participates in [2Fe-2S] cluster binding. 2 residues coordinate Mg(2+): Asp123 and Lys124. Position 124 is an N6-carboxylysine (Lys124). Cys195 is a [2Fe-2S] cluster binding site. A Mg(2+)-binding site is contributed by Glu491. Ser517 serves as the catalytic Proton acceptor.

It belongs to the IlvD/Edd family. Homodimer. It depends on [2Fe-2S] cluster as a cofactor. Requires Mg(2+) as cofactor.

The enzyme catalyses (2R)-2,3-dihydroxy-3-methylbutanoate = 3-methyl-2-oxobutanoate + H2O. It catalyses the reaction (2R,3R)-2,3-dihydroxy-3-methylpentanoate = (S)-3-methyl-2-oxopentanoate + H2O. Its pathway is amino-acid biosynthesis; L-isoleucine biosynthesis; L-isoleucine from 2-oxobutanoate: step 3/4. It participates in amino-acid biosynthesis; L-valine biosynthesis; L-valine from pyruvate: step 3/4. Functions in the biosynthesis of branched-chain amino acids. Catalyzes the dehydration of (2R,3R)-2,3-dihydroxy-3-methylpentanoate (2,3-dihydroxy-3-methylvalerate) into 2-oxo-3-methylpentanoate (2-oxo-3-methylvalerate) and of (2R)-2,3-dihydroxy-3-methylbutanoate (2,3-dihydroxyisovalerate) into 2-oxo-3-methylbutanoate (2-oxoisovalerate), the penultimate precursor to L-isoleucine and L-valine, respectively. This Sinorhizobium fredii (strain NBRC 101917 / NGR234) protein is Dihydroxy-acid dehydratase.